Reading from the N-terminus, the 1093-residue chain is Leukemia inhibitory factor receptor (1093 aa).

Residues 1–43 (MGAFSWWRQPSWMADNKRGRMTPSLPWLLSALTLLHLMMHVNG) form the signal peptide. Topologically, residues 44–829 (LKRGVQQDLK…SMFVVTKENS (786 aa)) are extracellular. The region spanning 45 to 127 (KRGVQQDLKC…QSKFTLNEKD (83 aa)) is the Fibronectin type-III 1 domain. 2 cysteine pairs are disulfide-bonded: C54–C64 and C81–C89. 4 N-linked (GlcNAc...) asparagine glycosylation sites follow: N165, N200, N239, and N262. Disulfide bonds link C209/C266 and C337/C347. 5 Fibronectin type-III domains span residues 331 to 428 (VPQK…ERVA), 431 to 530 (VPIS…TEAT), 534 to 625 (GPDT…IPND), 623 to 715 (PNDD…IGYI), and 720 to 829 (PIVA…KENS). 6 N-linked (GlcNAc...) asparagine glycosylation sites follow: N386, N403, N422, N441, N454, and N477. A disulfide bridge links C462 with C507. A WSXWS motif motif is present at residues 515 to 519 (WSKWS). N-linked (GlcNAc...) asparagine glycans are attached at residues N568, N648, N659, N676, N725, and N783. A helical membrane pass occupies residues 830-850 (VGLIIAILIPVAVAVIVGVVT). Over 851–1093 (SILCYRKREW…TNFFQNKPND (243 aa)) the chain is Cytoplasmic. Positions 865 to 873 (FYPDIPNPE) match the Box 1 motif motif. 2 disordered regions span residues 908–941 (ESRSIPPKIEDTEITSPVSERPGESSETDPENQA) and 1003–1093 (LPIN…KPND). 2 positions are modified to phosphoserine: S923 and S1040. Polar residues-rich tracts occupy residues 1028–1063 (ANVNTWNLVSPDSPRSTDSNSEVVSFGSPCSINSRQ) and 1082–1093 (SFTNFFQNKPND).

Belongs to the type I cytokine receptor family. Type 2 subfamily. Heterodimer composed of LIFR and IL6ST. The heterodimer formed by LIFR and IL6ST interacts with the complex formed by CNTF and CNTFR.

Its subcellular location is the cell membrane. Signal-transducing molecule. May have a common pathway with IL6ST. The soluble form inhibits the biological activity of LIF by blocking its binding to receptors on target cells. The chain is Leukemia inhibitory factor receptor (Lifr) from Rattus norvegicus (Rat).